The chain runs to 504 residues: Tachykinin-like peptides receptor 86C (504 aa).

Topologically, residues Met1–Thr84 are extracellular. N-linked (GlcNAc...) asparagine glycans are attached at residues Asn12, Asn28, and Asn36. A helical membrane pass occupies residues Ile85 to Val108. Over Thr109–Thr118 the chain is Cytoplasmic. A helical membrane pass occupies residues Asn119 to Phe143. Topologically, residues Met144–Tyr155 are extracellular. The helical transmembrane segment at Cys156–Phe179 threads the bilayer. The Cytoplasmic segment spans residues Asp180 to Arg199. The helical transmembrane segment at Ile200–Thr224 threads the bilayer. At Lys225 to Ala250 the chain is on the extracellular side. The helical transmembrane segment at Asp251–Ser275 threads the bilayer. The Cytoplasmic segment spans residues Leu276–Phe308. Residues Ile309–Tyr330 form a helical membrane-spanning segment. Residues His331–His343 lie on the Extracellular side of the membrane. Residues Met344–Asn367 traverse the membrane as a helical segment. Over Lys368–Met504 the chain is Cytoplasmic. Residues Pro393–Asn450 are disordered. Polar residues-rich tracts occupy residues Ser395 to Asn404 and Lys416 to Asn450.

The protein belongs to the G-protein coupled receptor 1 family. As to expression, expressed in central nervous system, as well as in subsets of neurons in each segment of the developing ventral ganglia.

The protein resides in the cell membrane. Functionally, receptor for tachykinin-like peptides. The protein is Tachykinin-like peptides receptor 86C (TkR86C) of Drosophila melanogaster (Fruit fly).